The sequence spans 188 residues: Probable DNA-directed RNA polymerase subunit delta (188 aa).

The 68-residue stretch at leucine 14 to tryptophan 81 folds into the HTH HARE-type domain. The disordered stretch occupies residues glutamate 96–aspartate 188. 2 stretches are compositionally biased toward acidic residues: residues isoleucine 118 to aspartate 150 and glutamate 158 to aspartate 188.

This sequence belongs to the RpoE family. In terms of assembly, RNAP is composed of a core of 2 alpha, a beta and a beta' subunits. The core is associated with a delta subunit and one of several sigma factors.

In terms of biological role, participates in both the initiation and recycling phases of transcription. In the presence of the delta subunit, RNAP displays an increased specificity of transcription, a decreased affinity for nucleic acids, and an increased efficiency of RNA synthesis because of enhanced recycling. The protein is Probable DNA-directed RNA polymerase subunit delta of Lactococcus lactis subsp. cremoris (strain MG1363).